The sequence spans 431 residues: Enolase (431 aa).

Position 167 (Gln167) interacts with (2R)-2-phosphoglycerate. Glu209 serves as the catalytic Proton donor. Residues Asp246, Glu289, and Asp316 each contribute to the Mg(2+) site. Positions 341, 370, 371, and 392 each coordinate (2R)-2-phosphoglycerate. The active-site Proton acceptor is Lys341.

Belongs to the enolase family. In terms of assembly, component of the RNA degradosome, a multiprotein complex involved in RNA processing and mRNA degradation. It depends on Mg(2+) as a cofactor.

It is found in the cytoplasm. Its subcellular location is the secreted. It localises to the cell surface. It carries out the reaction (2R)-2-phosphoglycerate = phosphoenolpyruvate + H2O. Its pathway is carbohydrate degradation; glycolysis; pyruvate from D-glyceraldehyde 3-phosphate: step 4/5. In terms of biological role, catalyzes the reversible conversion of 2-phosphoglycerate (2-PG) into phosphoenolpyruvate (PEP). It is essential for the degradation of carbohydrates via glycolysis. The chain is Enolase from Shewanella pealeana (strain ATCC 700345 / ANG-SQ1).